The chain runs to 476 residues: MANRFLRPNLIHRFSTVSPVGPPTTIIPEILSFDQPKPEVDLDLSDQARLFASVPISTLLRSTAILHATSIGPMVDLGSWLMSSKLMDTTVTRDLVLRIVKGTFYDHFCAGEDAAAAARRVSSVYESTGLKGMLVYGVEHAEDGGACDENIQKFIETVEAAKTLPSSHLSSVVVKITAICPMNVLKRVSDLLRWQYKNPNFKLPWKLNSFPVFSGLSPLYHTTSEPEPLTVEEERELEKAHERLKSVCLRCQESNVPLLIDAEDTILQPAIDYMAYWSAIMFNSDKDRPIVYNTIQAYLKDAGERLHLALRESEKMNVPIGFKLVRGAYMSSEAKLADSLGYKSPVHDTIQNTHDCYNDCMSFLMEKASNGSGIAVILATHNTDSGKLGARKASELGINKENGKIEFAQLYGMSDALSFGLKRAGFNVSKYMPYGPVDTAIPYLIRRAYENRGMMSTGALDRQLMRKELKRRVMAW.

A mitochondrion-targeting transit peptide spans 1-29 (MANRFLRPNLIHRFSTVSPVGPPTTIIPE).

This sequence belongs to the proline oxidase family. The cofactor is FAD. As to expression, expressed in the vascular tissue and in the abscission zone of petals, sepals, stamina, pistils and siliques. Not detected in petioles.

The protein localises to the mitochondrion. The catalysed reaction is L-proline + a quinone = (S)-1-pyrroline-5-carboxylate + a quinol + H(+). It functions in the pathway amino-acid degradation; L-proline degradation into L-glutamate; L-glutamate from L-proline: step 1/2. Converts proline to delta-1-pyrroline-5-carboxylate. This chain is Proline dehydrogenase 2, mitochondrial (POX2), found in Arabidopsis thaliana (Mouse-ear cress).